The sequence spans 84 residues: Cell division topological specificity factor (84 aa).

The protein belongs to the MinE family.

Prevents the cell division inhibition by proteins MinC and MinD at internal division sites while permitting inhibition at polar sites. This ensures cell division at the proper site by restricting the formation of a division septum at the midpoint of the long axis of the cell. The protein is Cell division topological specificity factor of Burkholderia cenocepacia (strain HI2424).